The sequence spans 339 residues: uncharacterized protein (339 aa).

Residues 1 to 12 (MDIDLNNQTDNN) are compositionally biased toward polar residues. Residues 1–30 (MDIDLNNQTDNNELIVEDTENPKNPNSTNI) are disordered.

This is an uncharacterized protein from Acanthamoeba polyphaga (Amoeba).